The following is a 621-amino-acid chain: Lamin-C (621 aa).

The tract at residues 1 to 47 (MSARRVTLNTRVSRASTSTPVGGASTSSRVGATSPTSPTRTSRQQEK) is disordered. A head region spans residues 1–47 (MSARRVTLNTRVSRASTSTPVGGASTSSRVGATSPTSPTRTSRQQEK). The segment covering 7 to 31 (TLNTRVSRASTSTPVGGASTSSRVG) has biased composition (polar residues). Residues 33–42 (TSPTSPTRTS) are compositionally biased toward low complexity. The residue at position 34 (S34) is a Phosphoserine. In terms of domain architecture, IF rod spans 46 to 402 (EKEELQHLND…KLLCGEERRL (357 aa)). The coil 1A stretch occupies residues 47 to 85 (KEELQHLNDRLACYIDRMRNLENENSRLTQELNLAQDTV). The interval 86–95 (NRETSNLKAV) is linker 1. Residues 96–233 (YEKELAAARK…QVHTQELTET (138 aa)) are coil 1B. A linker 2 region spans residues 234–257 (RSRRQIEISEIDGRLSRQYEAKLQ). The coil 2 stretch occupies residues 258 to 403 (QSLQELRDQY…LLCGEERRLN (146 aa)). The disordered stretch occupies residues 404–458 (IESPGRPTTDSGISSNGSHLTASASSRSGRVTPSGRRSATPGISGSSAVKRRRTV). The tail stretch occupies residues 404–621 (IESPGRPTTD…GVRSLFSLLF (218 aa)). S406 and S441 each carry phosphoserine. Residues 409–450 (RPTTDSGISSNGSHLTASASSRSGRVTPSGRRSATPGISGSS) show a composition bias toward polar residues. A Phosphothreonine modification is found at T443. The Nuclear localization signal signature appears at 453 to 458 (KRRRTV). Positions 468–582 (SEYSVNAAAK…EDVASYDRVR (115 aa)) constitute an LTD domain. A disordered region spans residues 585–605 (VSSHTSRHRSSGTPSTGFTLG).

The protein belongs to the intermediate filament family. As to quaternary structure, interacts with MAN1. In terms of tissue distribution, first detected from late stage 12 in the oenocytes, abdominal segments, hindgut and posterior spiracles, with expression increasing in stage 13 (at protein level). In stage 14, also becomes detectable in the foregut (at protein level). Stage 15 shows expression in the epidermis, dorsal longitudinal trunk, pharynx, esophagus and proventriculus, with the dorsal pharyngeal musculature showing expression in late stage 15 (at protein level). In stage 16 embryos, also detected in the exit glia with increasing expression in the somatic musculature (at protein level). Also detected in the visceral mesoderm but not in the midgut or central nervous system until the end of embryogenesis (at protein level). In third instar larvae, detectable at varying levels in all cell types (at protein level). Expressed in spermatocytes (at protein level).

The protein resides in the nucleus. Its subcellular location is the nucleus lamina. In terms of biological role, lamins are components of the nuclear lamina, a fibrous layer on the nucleoplasmic side of the inner nuclear membrane, which is thought to provide a framework for the nuclear envelope and may also interact with chromatin. In spermatocytes, regulates cytokinesis during meiosis. This is Lamin-C (LamC) from Drosophila melanogaster (Fruit fly).